The following is a 520-amino-acid chain: uncharacterized protein (520 aa).

9 helical membrane passes run 38-58, 84-104, 105-125, 138-158, 167-187, 220-240, 271-291, 318-338, and 355-375; these read VVLI…IPGG, IAIY…GIFN, IGIS…ILKV, IITV…VATL, VVSA…LVET, FGWL…AVVL, FLSF…VYTA, IAIG…SVLI, and ASLV…MVYF.

The protein resides in the cell membrane. This is an uncharacterized protein from Mycoplasma genitalium (strain ATCC 33530 / DSM 19775 / NCTC 10195 / G37) (Mycoplasmoides genitalium).